Here is a 368-residue protein sequence, read N- to C-terminus: GTPase Obg (368 aa).

One can recognise an Obg domain in the interval 1 to 159; the sequence is MQFIDQAEIE…RQLRLELKLL (159 aa). Positions 160-328 constitute an OBG-type G domain; that stretch reads AEVGIIGLPN…LMQLVWQWLD (169 aa). Residues 166 to 173, 191 to 195, 213 to 216, 280 to 283, and 309 to 311 each bind GTP; these read GLPNAGKS, FTTLV, DIPG, NKID, and SAA. Mg(2+) contacts are provided by serine 173 and threonine 193.

This sequence belongs to the TRAFAC class OBG-HflX-like GTPase superfamily. OBG GTPase family. In terms of assembly, monomer. It depends on Mg(2+) as a cofactor.

It is found in the cytoplasm. An essential GTPase which binds GTP, GDP and possibly (p)ppGpp with moderate affinity, with high nucleotide exchange rates and a fairly low GTP hydrolysis rate. Plays a role in control of the cell cycle, stress response, ribosome biogenesis and in those bacteria that undergo differentiation, in morphogenesis control. This is GTPase Obg from Synechocystis sp. (strain ATCC 27184 / PCC 6803 / Kazusa).